Consider the following 544-residue polypeptide: Protein adenylyltransferase (544 aa).

Residues 63 to 216 enclose the Fido domain; that stretch reads FDTAYLCHIH…LEPMQHLFED (154 aa). Residues 93 to 94, 106 to 107, 163 to 167, and R170 each bind ATP; these read FA, RT, and EGNGR.

Its subcellular location is the secreted. The catalysed reaction is L-tyrosyl-[protein] + ATP = O-(5'-adenylyl)-L-tyrosyl-[protein] + diphosphate. The enzyme catalyses L-threonyl-[protein] + ATP = 3-O-(5'-adenylyl)-L-threonyl-[protein] + diphosphate. Adenylyltransferase involved in virulence by mediating the addition of adenosine 5'-monophosphate (AMP) to specific residue of host target proteins. This Bartonella henselae (strain ATCC 49882 / DSM 28221 / CCUG 30454 / Houston 1) (Rochalimaea henselae) protein is Protein adenylyltransferase (bepA).